The primary structure comprises 502 residues: Mitochondrial fusion and transport protein UGO1 (502 aa).

At Met-1 the chain carries N-acetylmethionine. Over 1 to 293 (MNNNNVTEAT…VINSPDISKS (293 aa)) the chain is Cytoplasmic. The interval 1–294 (MNNNNVTEAT…INSPDISKSF (294 aa)) is binds FZO1. A Solcar repeat occupies 288–383 (PDISKSFILA…NSFFNKLFDL (96 aa)). A helical; Signal-anchor for type II membrane protein membrane pass occupies residues 294–314 (FILALGAGVFTSIILLPVDLI). Residues 312-502 (DLIRTRLIVT…VDINMEQEKF (191 aa)) are binds MGM1. The Mitochondrial intermembrane portion of the chain corresponds to 315–502 (RTRLIVTSFK…VDINMEQEKF (188 aa)).

In terms of assembly, interacts with FZO1 through its cytoplasmic domain and with MGM1 through its mitochondrial intermembrane space domain.

The protein localises to the mitochondrion outer membrane. In terms of biological role, required for mitochondrial fusion as well as normal mitochondrial morphology by bridging the essential interaction between FZO1 and MGM1. May coordinate fusion of inner and outer membranes during mitochondrial fusion. The chain is Mitochondrial fusion and transport protein UGO1 from Saccharomyces cerevisiae (strain ATCC 204508 / S288c) (Baker's yeast).